A 146-amino-acid polypeptide reads, in one-letter code: Large ribosomal subunit protein bL21 (146 aa).

The tract at residues 103–146 (DGKSPTIGPRPKKEKAVEPVEGASDDKPRRAAKKTAAKTAEDAD) is disordered. Basic and acidic residues predominate over residues 116-131 (EKAVEPVEGASDDKPR).

It belongs to the bacterial ribosomal protein bL21 family. In terms of assembly, part of the 50S ribosomal subunit. Contacts protein L20.

This protein binds to 23S rRNA in the presence of protein L20. The chain is Large ribosomal subunit protein bL21 from Nitrobacter winogradskyi (strain ATCC 25391 / DSM 10237 / CIP 104748 / NCIMB 11846 / Nb-255).